Here is a 198-residue protein sequence, read N- to C-terminus: Peptidyl-tRNA hydrolase (198 aa).

Residue Y14 coordinates tRNA. H19 (proton acceptor) is an active-site residue. Positions 64, 66, and 112 each coordinate tRNA.

It belongs to the PTH family. Monomer.

It is found in the cytoplasm. The catalysed reaction is an N-acyl-L-alpha-aminoacyl-tRNA + H2O = an N-acyl-L-amino acid + a tRNA + H(+). Its function is as follows. Hydrolyzes ribosome-free peptidyl-tRNAs (with 1 or more amino acids incorporated), which drop off the ribosome during protein synthesis, or as a result of ribosome stalling. Catalyzes the release of premature peptidyl moieties from peptidyl-tRNA molecules trapped in stalled 50S ribosomal subunits, and thus maintains levels of free tRNAs and 50S ribosomes. This is Peptidyl-tRNA hydrolase from Beijerinckia indica subsp. indica (strain ATCC 9039 / DSM 1715 / NCIMB 8712).